Consider the following 397-residue polypeptide: Acetate kinase (397 aa).

Asparagine 7 lines the Mg(2+) pocket. ATP is bound at residue lysine 14. Arginine 90 provides a ligand contact to substrate. Aspartate 147 functions as the Proton donor/acceptor in the catalytic mechanism. ATP is bound by residues 207 to 211 (HLGNG), 282 to 284 (DFR), and 330 to 334 (GLGEN). Position 383 (glutamate 383) interacts with Mg(2+).

The protein belongs to the acetokinase family. Homodimer. Mg(2+) is required as a cofactor. It depends on Mn(2+) as a cofactor.

The protein resides in the cytoplasm. The catalysed reaction is acetate + ATP = acetyl phosphate + ADP. Its pathway is metabolic intermediate biosynthesis; acetyl-CoA biosynthesis; acetyl-CoA from acetate: step 1/2. Catalyzes the formation of acetyl phosphate from acetate and ATP. Can also catalyze the reverse reaction. The chain is Acetate kinase from Clostridium botulinum (strain Langeland / NCTC 10281 / Type F).